The sequence spans 530 residues: Cytochrome P450 monooxygenase sttB (530 aa).

N-linked (GlcNAc...) asparagine glycosylation is present at Asn-5. The chain crosses the membrane as a helical span at residues 24-44; that stretch reads LPILTVALLTGIASAVYINVS. Asn-230 carries N-linked (GlcNAc...) asparagine glycosylation.

Belongs to the cytochrome P450 family. Heme serves as cofactor.

The protein localises to the membrane. The catalysed reaction is preaspterpenacid acid I + reduced [NADPH--hemoprotein reductase] + O2 = preaspterpenacid acid II + oxidized [NADPH--hemoprotein reductase] + H2O + H(+). It participates in secondary metabolite biosynthesis; terpenoid biosynthesis. In terms of biological role, cytochrome P450 monooxygenase; part of the gene cluster that mediates the biosynthesis of aspterpenacids. Performs the C22-oxidative modification of the terpene synthase sttA product preaspterpenacid I to produce preaspterpenacid II. It has still to be determined how preaspterpenacid II is further modified to produce aspterpenacids. This Aspergillus terreus (strain NIH 2624 / FGSC A1156) protein is Cytochrome P450 monooxygenase sttB.